The sequence spans 745 residues: Bacteriophage N4 adsorption protein B (745 aa).

Helical transmembrane passes span 8–28 (FATWLYGLKVIAITLAVIMFI), 362–382 (ISNFVSFLAMLVMIQLLLLLA), and 393–413 (FLSIFSGSAWLMTLLWLNFGL).

It is found in the cell inner membrane. In terms of biological role, required for bacteriophage N4 adsorption. May be a component of the phage receptor. The polypeptide is Bacteriophage N4 adsorption protein B (nfrB) (Escherichia coli O157:H7).